Here is a 313-residue protein sequence, read N- to C-terminus: MKKLNIIFAGTPDISAQVLKDLYKSQHNIQAVLTQPDRAKGRGKKVQFSPVKEVALANHTPVFQPLSFKKNPEVLEQIKQLKPDVIVVIAYGIIVPQEFLDIPRYGCLNIHVSLLPKWRGAAPIQRAIQAGDTKTGVCIMQMDAGLDTGDILNTLEIEIQETDTSQTLHDKFAKLSIKPLLETLEKIEIIKPEPQQGEPTYAHKITKQEGLIDFTKSAWRISCHIRAFTPWPGAYFILDDEAIKVGEFEILYQNTDNRKAGTIIDIYRSGFDIATSDKIIRFRQLQFPNKKMLNIVDILNGKDLDKYIGYKLG.

Residue 113–116 (SLLP) coordinates (6S)-5,6,7,8-tetrahydrofolate.

This sequence belongs to the Fmt family.

The catalysed reaction is L-methionyl-tRNA(fMet) + (6R)-10-formyltetrahydrofolate = N-formyl-L-methionyl-tRNA(fMet) + (6S)-5,6,7,8-tetrahydrofolate + H(+). In terms of biological role, attaches a formyl group to the free amino group of methionyl-tRNA(fMet). The formyl group appears to play a dual role in the initiator identity of N-formylmethionyl-tRNA by promoting its recognition by IF2 and preventing the misappropriation of this tRNA by the elongation apparatus. The sequence is that of Methionyl-tRNA formyltransferase from Francisella tularensis subsp. holarctica (strain FTNF002-00 / FTA).